We begin with the raw amino-acid sequence, 108 residues long: UPF0060 membrane protein Rsph17029_0436 (108 aa).

The next 4 helical transmembrane spans lie at 5 to 25 (LAAY…VWAW), 32 to 52 (ALWL…LALT), 62 to 82 (AVYG…VEGV), and 86 to 106 (RWDM…LWAP).

The protein belongs to the UPF0060 family.

It localises to the cell inner membrane. The sequence is that of UPF0060 membrane protein Rsph17029_0436 from Cereibacter sphaeroides (strain ATCC 17029 / ATH 2.4.9) (Rhodobacter sphaeroides).